A 1180-amino-acid chain; its full sequence is uncharacterized protein (1180 aa).

7 disordered regions span residues 229-280 (RQQG…DTSI), 431-465 (KQPPKEKAHRRGAPHPESEPESSEESTPVWRPPLK), 484-575 (SRDT…PNMR), 730-758 (GRPLRETHHNDQDPEPRSMTLDSPRASRT), 810-986 (GKAE…ASWD), 1045-1109 (RLQE…ELEM), and 1125-1152 (ERLEYQRRKQEAEEKARLEAEERRQKEE). Residues 269-279 (QEDETQAEDTS) show a composition bias toward acidic residues. Basic residues predominate over residues 431–443 (KQPPKEKAHRRGA). Positions 486-497 (DTLSPQGSSSLP) are enriched in polar residues. Residues 509–518 (SKARHTRVHS) are compositionally biased toward basic residues. Composition is skewed to basic and acidic residues over residues 730–745 (GRPLRETHHNDQDPEP), 826–837 (SHERDLINEAKR), and 846–856 (TKGPKSEREGK). The segment covering 872–889 (KAKKKLEKKTRPQRKRTQ) has biased composition (basic residues). Residues 937–959 (QESQVSLDGRSSPSQIATVTGNM) are compositionally biased toward polar residues. 3 stretches are compositionally biased toward basic and acidic residues: residues 960–986 (ESKEERRCEDPSKALLTKREQEKASWD), 1045–1106 (RLQE…RQEE), and 1127–1152 (LEYQRRKQEAEEKARLEAEERRQKEE). The stretch at 988–1171 (LRAERAEMRW…ATKQAQEQAR (184 aa)) forms a coiled coil.

This is an uncharacterized protein from Homo sapiens (Human).